Consider the following 526-residue polypeptide: MTIPTSFEMLKGMHIKDAFLLIAMLYLGYLLCICFYNIYLHPLRHIPGSKLAVMGPYLEFYHEVIRQGQYLWEIEKMHDKYGPIVRVNEREIHIRDSSYYHTIYAAGSRKTNKDAATVGAFDVPNSTAATVDHDQHRARRGYLNPYFSKRSLANLEPTIHERISKLLNRLEQHQNNDDIITLDGIFSALTADVICSRFYGKHFDYLSIPDYHFVVRDGFQGLTKLYHLGRFLPTLVTILKCLPQQIIRLILPNLADLIVMRDEIQANGIAQFTSSQTADSKASALVGALGDKNIPPHERTVARLLDEGTVFLFAGTETTSRTLAVTMFYLLTNPDCLKKLRAELDTLPSTEDYQHSLSTLESLPYLSGVVHEGLRLAFGPITRSARVPMNVDLQYKEYTIPAGTPLSMSTYFVHTDKELYPEPEKFKPERWIQAAEENIPLKKFLTNFSQGSRQCIGISMSFAEMYLTISRVARAYNFELYETTAADLDMTYARIVPYPKEIPGKTEGLGEIRVKIVGKNHSQIEE.

A helical membrane pass occupies residues Ala18–Ile38. Asn125 and Asn447 each carry an N-linked (GlcNAc...) asparagine glycan. Cys455 serves as a coordination point for heme. An N-linked (GlcNAc...) asparagine glycan is attached at Asn520.

The protein belongs to the cytochrome P450 family. The cofactor is heme.

The protein resides in the membrane. It participates in mycotoxin biosynthesis. Its function is as follows. Cytochrome P450 monooxygenase; part of the satratoxin SC2 cluster involved in the biosynthesis of satratoxins, trichothecene mycotoxins that are associated with human food poisonings. Satratoxins are suggested to be made by products of multiple gene clusters (SC1, SC2 and SC3) that encode 21 proteins in all, including polyketide synthases, acetyltransferases, and other enzymes expected to modify the trichothecene skeleton. SC1 encodes 10 proteins, SAT1 to SAT10. The largest are SAT8, which encodes a putative polyketide synthase (PKS) with a conventional non-reducing architecture, and SAT10, a putative protein containing four ankyrin repeats and thus may be involved in protein scaffolding. The putative short-chain reductase SAT3 may assist the PKS in some capacity. SAT6 contains a secretory lipase domain and acts probably as a trichothecene esterase. SAT5 encodes a putative acetyltransferase, and so, with SAT6, may affect endogenous protection from toxicity. The probable transcription factor SAT9 may regulate the expression of the SC1 cluster. SC2 encodes proteins SAT11 to SAT16, the largest of which encodes the putative reducing PKS SAT13. SAT11 is a cytochrome P450 monooxygenase, while SAT14 and SAT16 are probable acetyltransferases. The SC2 cluster may be regulated by the transcription factor SAT15. SC3 is a small cluster that encodes 5 proteins, SAT17 to SAT21. SAT21 is a putative MFS-type transporter which may have a role in exporting secondary metabolites. The four other proteins putatively encoded in SC3 include the taurine hydroxylase-like protein SAT17, the O-methyltransferase SAT18, the acetyltransferase SAT19, and the Cys6-type zinc finger SAT20, the latter being probably involved in regulation of SC3 expression. The sequence is that of Cytochrome P450 monooxygenase SAT11 from Stachybotrys chartarum (strain CBS 109288 / IBT 7711) (Toxic black mold).